Consider the following 785-residue polypeptide: Protein SEY1 (785 aa).

The Cytoplasmic segment spans residues 1 to 690 (MTDLEVSAIQ…KRSVINSKTE (690 aa)). The 227-residue stretch at 40–266 (GLNYHIVSVF…SEDQLFNEGY (227 aa)) folds into the GB1/RHD3-type G domain. GTP is bound at residue 50–57 (GSQSTGKS). Residues 451-479 (PKLRELEEELSNLRTELVNKEQENIKTKI) are a coiled coil. The chain crosses the membrane as a helical span at residues 691 to 711 (VPLYIYALLLVLGWNEFMIIL). The Lumenal portion of the chain corresponds to 712-714 (RNP). A helical transmembrane segment spans residues 715–735 (LLITLLLIGLTGLYLGYKTKL). Residues 736–785 (LGPIVQVVQAMIQELQDQAKNKLRDVLVSEPEAPSQVRIGKEVDATKDED) are Cytoplasmic-facing.

It belongs to the TRAFAC class dynamin-like GTPase superfamily. GB1/RHD3 GTPase family. RHD3 subfamily.

The protein localises to the endoplasmic reticulum membrane. Functionally, cooperates with the reticulon proteins and tubule-shaping DP1 family proteins to generate and maintain the structure of the tubular endoplasmic reticulum network. Has GTPase activity, which is required for its function in ER organization. The chain is Protein SEY1 from Komagataella phaffii (strain GS115 / ATCC 20864) (Yeast).